A 128-amino-acid polypeptide reads, in one-letter code: Small ribosomal subunit protein bS6 (128 aa).

It belongs to the bacterial ribosomal protein bS6 family.

Binds together with bS18 to 16S ribosomal RNA. The polypeptide is Small ribosomal subunit protein bS6 (Thermotoga petrophila (strain ATCC BAA-488 / DSM 13995 / JCM 10881 / RKU-1)).